The sequence spans 613 residues: DNA mismatch repair protein MutL (613 aa).

This sequence belongs to the DNA mismatch repair MutL/HexB family.

In terms of biological role, this protein is involved in the repair of mismatches in DNA. It is required for dam-dependent methyl-directed DNA mismatch repair. May act as a 'molecular matchmaker', a protein that promotes the formation of a stable complex between two or more DNA-binding proteins in an ATP-dependent manner without itself being part of a final effector complex. The polypeptide is DNA mismatch repair protein MutL (Bradyrhizobium sp. (strain ORS 278)).